The sequence spans 673 residues: Centrosomal protein kizuna (673 aa).

Disordered regions lie at residues 175 to 207 (TEHK…TDSC), 255 to 413 (GSNT…ALKL), 432 to 480 (QTLS…NSVK), 494 to 516 (ECGR…ILND), and 613 to 673 (SEAS…DFYD). Composition is skewed to polar residues over residues 196–207 (QTAQSSNVTDSC) and 255–266 (GSNTRHGKSNLS). Basic and acidic residues-rich tracts occupy residues 267 to 293 (EGKK…DLKC) and 303 to 316 (ILTR…EKRA). 2 positions are modified to phosphoserine: Ser-317 and Ser-321. The span at 331–357 (SENKWSQEKHSPWEGVSDHLAHREPKS) shows a compositional bias: basic and acidic residues. Residue Thr-379 is modified to Phosphothreonine; by PLK1. Residues 471-480 (TLKEHDNSVK) are compositionally biased toward basic and acidic residues. Low complexity-rich tracts occupy residues 503–512 (SSESSCSLPS) and 613–625 (SEAS…GSPL). Phosphoserine occurs at positions 647, 650, and 652.

It belongs to the kizuna family. Interacts with AKAP9, CEP72, ODF2, PCNT and TUBGCP2. Phosphorylation at Thr-379 by PLK1 is not needed for centrosomal localization or pericentriolar material expansion but is indispensable for spindle-pole stabilization.

The protein localises to the cytoplasm. Its subcellular location is the cytoskeleton. The protein resides in the microtubule organizing center. It localises to the centrosome. It is found in the cilium basal body. Its function is as follows. Centrosomal protein required for establishing a robust mitotic centrosome architecture that can endure the forces that converge on the centrosomes during spindle formation. Required for stabilizing the expanded pericentriolar material around the centriole. This chain is Centrosomal protein kizuna (KIZ), found in Homo sapiens (Human).